We begin with the raw amino-acid sequence, 261 residues long: Proteasome subunit alpha type-4 (261 aa).

Phosphoserine occurs at positions 13 and 75. An N6-acetyllysine modification is found at K127. At S173 the chain carries Phosphoserine. K176 bears the N6-acetyllysine mark. A disordered region spans residues 240-261 (HEEEEAKAEREKKEKEQREKDK).

The protein belongs to the peptidase T1A family. As to quaternary structure, the 26S proteasome consists of a 20S proteasome core and two 19S regulatory subunits. The 20S proteasome core is a barrel-shaped complex made of 28 subunits that are arranged in four stacked rings. The two outer rings are each formed by seven alpha subunits, and the two inner rings are formed by seven beta subunits. The proteolytic activity is exerted by three beta-subunits PSMB5, PSMB6 and PSMB7. As to expression, ubiquitous.

The protein resides in the cytoplasm. The protein localises to the nucleus. Functionally, component of the 20S core proteasome complex involved in the proteolytic degradation of most intracellular proteins. This complex plays numerous essential roles within the cell by associating with different regulatory particles. Associated with two 19S regulatory particles, forms the 26S proteasome and thus participates in the ATP-dependent degradation of ubiquitinated proteins. The 26S proteasome plays a key role in the maintenance of protein homeostasis by removing misfolded or damaged proteins that could impair cellular functions, and by removing proteins whose functions are no longer required. Associated with the PA200 or PA28, the 20S proteasome mediates ubiquitin-independent protein degradation. This type of proteolysis is required in several pathways including spermatogenesis (20S-PA200 complex) or generation of a subset of MHC class I-presented antigenic peptides (20S-PA28 complex). The chain is Proteasome subunit alpha type-4 (Psma4) from Rattus norvegicus (Rat).